The following is a 516-amino-acid chain: NADH-quinone oxidoreductase subunit N (516 aa).

14 helical membrane passes run 12–32 (LLPA…DLLV), 37–57 (VTIS…VLVG), 81–101 (LVAV…GPLL), 108–128 (VGEY…LGAA), 131–151 (LITL…LVGL), 163–183 (VTFF…AALL), 213–233 (VAVA…PFHA), 246–266 (VAAY…LAVV), 274–294 (ITGL…NLVA), 303–323 (LLAW…GALA), 341–361 (VAYT…VVAL), 386–406 (VGLA…AGLF), 419–439 (GAAG…AYYL), and 491–511 (VVLA…QLVL).

It belongs to the complex I subunit 2 family. In terms of assembly, NDH-1 is composed of 14 different subunits. Subunits NuoA, H, J, K, L, M, N constitute the membrane sector of the complex.

The protein localises to the cell membrane. It carries out the reaction a quinone + NADH + 5 H(+)(in) = a quinol + NAD(+) + 4 H(+)(out). Its function is as follows. NDH-1 shuttles electrons from NADH, via FMN and iron-sulfur (Fe-S) centers, to quinones in the respiratory chain. The immediate electron acceptor for the enzyme in this species is believed to be a menaquinone. Couples the redox reaction to proton translocation (for every two electrons transferred, four hydrogen ions are translocated across the cytoplasmic membrane), and thus conserves the redox energy in a proton gradient. This chain is NADH-quinone oxidoreductase subunit N, found in Salinispora tropica (strain ATCC BAA-916 / DSM 44818 / JCM 13857 / NBRC 105044 / CNB-440).